The primary structure comprises 1163 residues: Receptor-type guanylate cyclase gcy-21 (1163 aa).

A signal peptide spans Met1–Asn17. Topologically, residues Phe18–Thr490 are extracellular. Residues Asn102, Asn296, Asn322, Asn346, Asn466, and Asn488 are each glycosylated (N-linked (GlcNAc...) asparagine). Residues Phe491–Phe511 traverse the membrane as a helical segment. The Cytoplasmic segment spans residues Leu512–Ser1163. In terms of domain architecture, Protein kinase spans Phe587–Thr882. ATP contacts are provided by residues Ala593–Ile601 and Lys635. Residues Thr901–Leu930 are a coiled coil. The Guanylate cyclase domain occupies Thr953–Glu1083.

It belongs to the adenylyl cyclase class-4/guanylyl cyclase family. In terms of tissue distribution, expressed in ASG sensory neurons.

The protein resides in the cell membrane. It carries out the reaction GTP = 3',5'-cyclic GMP + diphosphate. In terms of biological role, guanylate cyclase involved in the production of the second messenger cGMP. Plays a role in dauer formation. The chain is Receptor-type guanylate cyclase gcy-21 from Caenorhabditis elegans.